A 439-amino-acid chain; its full sequence is GTPase Der (439 aa).

2 EngA-type G domains span residues 2–168 and 181–357; these read ATVL…EEKG and IKIA…SSYT. GTP is bound by residues 8–15, 55–59, 118–121, 187–194, 234–238, and 300–303; these read GKPNVGKS, DTCGV, NKTE, GRPNVGKS, DTAGL, and NKWD. Residues 358–439 enclose the KH-like domain; the sequence is TKVPSSALNS…PIFLKFKKSR (82 aa).

This sequence belongs to the TRAFAC class TrmE-Era-EngA-EngB-Septin-like GTPase superfamily. EngA (Der) GTPase family. In terms of assembly, associates with the 50S ribosomal subunit.

GTPase that plays an essential role in the late steps of ribosome biogenesis. The polypeptide is GTPase Der (Thermotoga neapolitana (strain ATCC 49049 / DSM 4359 / NBRC 107923 / NS-E)).